The following is an 860-amino-acid chain: Eukaryotic translation initiation factor 3 subunit C (860 aa).

A disordered region spans residues 1 to 76 (MSRFFYGNDS…SEESEEEDVV (76 aa)). Acidic residues predominate over residues 10 to 51 (SDSDSSGSDEEELYSDEEVEQSEEESSEEDASSEEESSEDED). Positions 599–773 (FHMHINLELL…DAIVFRKGVE (175 aa)) constitute a PCI domain. The interval 812–860 (RDQGAGARGGRGPRGGGQARGGPRLPGGQQRRPGGQQFGGGALGGAIKA) is disordered. A compositionally biased stretch (gly residues) spans 817–831 (GARGGRGPRGGGQAR). A compositionally biased stretch (low complexity) spans 832–846 (GGPRLPGGQQRRPGG). Gly residues predominate over residues 847–860 (QQFGGGALGGAIKA).

The protein belongs to the eIF-3 subunit C family. As to quaternary structure, component of the eukaryotic translation initiation factor 3 (eIF-3) complex.

The protein resides in the cytoplasm. In terms of biological role, component of the eukaryotic translation initiation factor 3 (eIF-3) complex, which is involved in protein synthesis of a specialized repertoire of mRNAs and, together with other initiation factors, stimulates binding of mRNA and methionyl-tRNAi to the 40S ribosome. The eIF-3 complex specifically targets and initiates translation of a subset of mRNAs involved in cell proliferation. The polypeptide is Eukaryotic translation initiation factor 3 subunit C (nip1) (Emericella nidulans (strain FGSC A4 / ATCC 38163 / CBS 112.46 / NRRL 194 / M139) (Aspergillus nidulans)).